We begin with the raw amino-acid sequence, 238 residues long: Urease subunit alpha (238 aa).

The interval 1 to 102 is urease gamma; it reads MKLTPKELDK…LVTVHTPIES (102 aa). Positions 103-238 are urease beta; sequence KGKLVPGELF…DDNYVKTIKE (136 aa).

It in the N-terminal section; belongs to the urease gamma subunit family. In the C-terminal section; belongs to the urease beta subunit family. In terms of assembly, heterohexamer of 3 UreA (alpha) and 3 UreB (beta) subunits.

It localises to the cytoplasm. The catalysed reaction is urea + 2 H2O + H(+) = hydrogencarbonate + 2 NH4(+). It participates in nitrogen metabolism; urea degradation; CO(2) and NH(3) from urea (urease route): step 1/1. This chain is Urease subunit alpha, found in Helicobacter acinonychis (strain Sheeba).